The sequence spans 130 residues: DNA-directed RNA polymerase subunit omega (130 aa).

A disordered region spans residues 80–130 (PEPDTVPLIGSAGASVDADDTEVAPERMTEEELLKGLEGLAPPEEQPEEDE). The span at 103 to 114 (APERMTEEELLK) shows a compositional bias: basic and acidic residues.

It belongs to the RNA polymerase subunit omega family. The RNAP catalytic core consists of 2 alpha, 1 beta, 1 beta' and 1 omega subunit. When a sigma factor is associated with the core the holoenzyme is formed, which can initiate transcription.

The enzyme catalyses RNA(n) + a ribonucleoside 5'-triphosphate = RNA(n+1) + diphosphate. Functionally, promotes RNA polymerase assembly. Latches the N- and C-terminal regions of the beta' subunit thereby facilitating its interaction with the beta and alpha subunits. The sequence is that of DNA-directed RNA polymerase subunit omega from Rhodopseudomonas palustris (strain BisB18).